A 343-amino-acid polypeptide reads, in one-letter code: Isopentenyl-diphosphate delta-isomerase (343 aa).

9-10 (RK) contributes to the substrate binding site. FMN is bound by residues serine 66, 67-69 (SMT), serine 98, and asparagine 126. 98-100 (SQR) is a binding site for substrate. Glutamine 161 provides a ligand contact to substrate. Glutamate 162 is a Mg(2+) binding site. Residues lysine 193, threonine 223, 273 to 275 (GIR), and 294 to 295 (AA) each bind FMN.

Belongs to the IPP isomerase type 2 family. In terms of assembly, homooctamer. Dimer of tetramers. The cofactor is FMN. NADPH is required as a cofactor. Mg(2+) serves as cofactor.

The protein resides in the cytoplasm. It catalyses the reaction isopentenyl diphosphate = dimethylallyl diphosphate. Functionally, involved in the biosynthesis of isoprenoids. Catalyzes the 1,3-allylic rearrangement of the homoallylic substrate isopentenyl (IPP) to its allylic isomer, dimethylallyl diphosphate (DMAPP). This Hydrogenovibrio crunogenus (strain DSM 25203 / XCL-2) (Thiomicrospira crunogena) protein is Isopentenyl-diphosphate delta-isomerase.